The chain runs to 156 residues: Small ribosomal subunit protein uS7 (156 aa).

The protein belongs to the universal ribosomal protein uS7 family. Part of the 30S ribosomal subunit. Contacts proteins S9 and S11.

Its function is as follows. One of the primary rRNA binding proteins, it binds directly to 16S rRNA where it nucleates assembly of the head domain of the 30S subunit. Is located at the subunit interface close to the decoding center, probably blocks exit of the E-site tRNA. This Clostridium botulinum (strain Alaska E43 / Type E3) protein is Small ribosomal subunit protein uS7.